Here is a 433-residue protein sequence, read N- to C-terminus: SPI-2 type 3 secretion system ATPase (433 aa).

Residue 165–170 (GVGKST) coordinates ATP.

This sequence belongs to the ATPase alpha/beta chains family. T3SS ATPase subfamily. The core secretion machinery of the T3SS is composed of approximately 20 different proteins, including cytoplasmic components, a base, an export apparatus and a needle. This subunit is part of the cytosolic complex. Forms homohexamers. Forms a complex with SsaK/SctL (stator protein) and SsaQ/SctQ (the major sorting platform component). Interacts with the T3SS-2 specific chaperones SsaE, SseA, SscA, SscB, and SrcA.

It is found in the cytoplasm. The enzyme catalyses ATP + H2O + cellular proteinSide 1 = ADP + phosphate + cellular proteinSide 2.. In terms of biological role, ATPase component of the type III secretion system (T3SS), also called injectisome, which is used to inject bacterial effector proteins into eukaryotic host cells. Acts as a molecular motor to provide the energy that is required for the export of proteins. Required for type III secretion apparatus (T3SA) formation, secretion of a subset of SPI-2 effectors and virulence. May play a critical role in T3SS substrate recognition, disassembly of the effector/chaperone complex and unfolding of the effector in an ATP-dependent manner prior to secretion. Releases the effector protein SseB from the T3SS-2 specific chaperone SsaE in an ATP-dependent manner. This chain is SPI-2 type 3 secretion system ATPase, found in Salmonella typhimurium (strain LT2 / SGSC1412 / ATCC 700720).